Reading from the N-terminus, the 745-residue chain is 5-methyltetrahydropteroyltriglutamate--homocysteine methyltransferase (745 aa).

5-methyltetrahydropteroyltri-L-glutamate is bound by residues 16 to 19 (REWK) and K110. L-homocysteine is bound by residues 420–422 (IGS) and E473. Residues 420 to 422 (IGS) and E473 each bind L-methionine. W550 is a 5-methyltetrahydropteroyltri-L-glutamate binding site. D588 contributes to the L-homocysteine binding site. Position 588 (D588) interacts with L-methionine. E594 lines the 5-methyltetrahydropteroyltri-L-glutamate pocket. Residues H630, C632, and E654 each coordinate Zn(2+). Catalysis depends on H683, which acts as the Proton donor. A Zn(2+)-binding site is contributed by C715.

The protein belongs to the vitamin-B12 independent methionine synthase family. The cofactor is Zn(2+).

It carries out the reaction 5-methyltetrahydropteroyltri-L-glutamate + L-homocysteine = tetrahydropteroyltri-L-glutamate + L-methionine. It participates in amino-acid biosynthesis; L-methionine biosynthesis via de novo pathway; L-methionine from L-homocysteine (MetE route): step 1/1. Functionally, catalyzes the transfer of a methyl group from 5-methyltetrahydrofolate to homocysteine resulting in methionine formation. The sequence is that of 5-methyltetrahydropteroyltriglutamate--homocysteine methyltransferase from Streptococcus agalactiae serotype III (strain NEM316).